The primary structure comprises 651 residues: Endoplasmic reticulum chaperone BiP (651 aa).

An N-terminal signal peptide occupies residues 1–20 (MGLSTYVGIFLLCILTLSRC). Residues 36–39 (GTTY), Lys96, 226–228 (GGT), 292–299 (EKAKRTLS), and 363–366 (GSTR) each bind ATP. Residues 125 to 279 (KPYMKVQVGS…KKKEGKDITK (155 aa)) form a nucleotide-binding (NBD) region. A substrate-binding (SBD) region spans residues 399–499 (VQAGVISGVE…PRGLPQIEVT (101 aa)). Positions 648–651 (KEEL) match the Prevents secretion from ER motif.

It belongs to the heat shock protein 70 family.

It localises to the endoplasmic reticulum lumen. The catalysed reaction is ATP + H2O = ADP + phosphate + H(+). With respect to regulation, the chaperone activity is regulated by ATP-induced allosteric coupling of the nucleotide-binding (NBD) and substrate-binding (SBD) domains. In the ADP-bound and nucleotide-free (apo) states, the two domains have little interaction. In contrast, in the ATP-bound state the two domains are tightly coupled, which results in drastically accelerated kinetics in both binding and release of polypeptide substrates. J domain-containing co-chaperones stimulate the ATPase activity and are required for efficient substrate recognition. In terms of biological role, endoplasmic reticulum chaperone that plays a key role in protein folding and quality control in the endoplasmic reticulum lumen. Involved in the correct folding of proteins and degradation of misfolded proteins. Acts as a key repressor of the unfolded protein response (UPR). This chain is Endoplasmic reticulum chaperone BiP, found in Echinococcus granulosus (Hydatid tapeworm).